The following is a 469-amino-acid chain: SHC-transforming protein 1 (469 aa).

A disordered region spans residues 1-26 (MNKLSGGGGRRTRVEGGQLGGEEWTR). Residue S29 is modified to Phosphoserine. K44 carries the N6-acetyllysine modification. The 184-residue stretch at 46-229 (MGPGVSYLVR…AGFDGSAWDE (184 aa)) folds into the PID domain. Positions 230-373 (EEEELPDHQY…SMAEQLQGES (144 aa)) are CH1. Residues Y239, Y240, and Y313 each carry the phosphotyrosine modification. Positions 322 to 344 (ARQAGGGAGPPNPSVNGSAPRDL) are disordered. S339 bears the Phosphoserine mark. One can recognise an SH2 domain in the interval 374–465 (WFHGKLSRRE…GSELCLQQPV (92 aa)).

In terms of assembly, interacts with CPNE3; this interaction may mediate the binding of CPNE3 with ERBB2. Interacts with the NPXY motif of tyrosine-phosphorylated IGF1R and INSR in vitro via the PID domain. Once activated, binds to GRB2. Interacts with tyrosine-phosphorylated CD3T and DDR2. Interacts with the N-terminal region of APS. Interacts with phosphorylated LRP1 and IRS4. Interacts with INPP5D/SHIP1 and INPPL1/SHIP2. Interacts with ALK, GAB2, GRB7 and KIT. Interacts with PTPN6/SHP (tyrosine phosphorylated). Identified in a complex containing FGFR4, NCAM1, CDH2, PLCG1, FRS2A, SRC, SHC1, GAP43 and CTTN. Interacts with EPHB1 and GRB2; activates the MAPK/ERK cascade to regulate cell migration. Interacts with PDGFRB (tyrosine-phosphorylated). Interacts with ERBB4. Interacts with TEK/TIE2 (tyrosine-phosphorylated). Interacts with PTK2/FAK1. Interacts with FLT4 (tyrosine-phosphorylated). Interacts with the Trk receptors NTRK1, NTRK2 and NTRK3; in a phosphotyrosine-dependent manner. Interacts with CEACAM1; this interaction is CEACAM1-phosphorylation-dependent and mediates interaction with EGFR or INSR resulting in decrease coupling of SHC1 to the MAPK3/ERK1-MAPK1/ERK2 pathway. Interacts (via PID domain) with PEAK1 (when phosphorylated). Found in a complex with PPP1CA, PPP1CC, SHC1 and PEAK1. Post-translationally, phosphorylated by activated epidermal growth factor receptor. Phosphorylated in response to KIT signaling. Tyrosine phosphorylated in response to FLT3 signaling and by ligand-activated ALK. Tyrosine phosphorylated by TEK/TIE2. Tyrosine phosphorylated by ligand-activated PDGFRB. May be tyrosine phosphorylated by activated PTK2/FAK1. Dephosphorylation by PTPN2 may regulate interaction with GRB2. Phosphorylated in response to FLT4 signaling. Tyrosine phosphorylated by activated PTK2B/PYK2.

It localises to the cytoplasm. Its subcellular location is the cell junction. The protein resides in the focal adhesion. Signaling adapter that couples activated growth factor receptors to signaling pathways. Participates in a signaling cascade initiated by activated KIT and KITLG/SCF. Participates in signaling downstream of the angiopoietin receptor TEK/TIE2, and plays a role in the regulation of endothelial cell migration and sprouting angiogenesis. This is SHC-transforming protein 1 (Shc1) from Rattus norvegicus (Rat).